The primary structure comprises 435 residues: ATP-dependent RNA helicase RhlB (435 aa).

The Q motif signature appears at 9 to 37 (QKFADFSLQTEIKTALNESGFEYCTPIQA). Residues 40–219 (LPILLQKKDI…YDHMNEPEKV (180 aa)) form the Helicase ATP-binding domain. 53–60 (AQTGTGKT) provides a ligand contact to ATP. The DEAD box signature appears at 165–168 (DEAD). The Helicase C-terminal domain maps to 243–390 (KMRLLLTLLE…VTNYDSEALL (148 aa)). A disordered region spans residues 395–435 (APVRVHRKHNSRPQGRSGSGGKPRSGNRNAPRRHDKTRRHS). A compositionally biased stretch (basic residues) spans 424-435 (APRRHDKTRRHS).

This sequence belongs to the DEAD box helicase family. RhlB subfamily. As to quaternary structure, component of the RNA degradosome, which is a multiprotein complex involved in RNA processing and mRNA degradation.

The protein resides in the cytoplasm. The catalysed reaction is ATP + H2O = ADP + phosphate + H(+). Its function is as follows. DEAD-box RNA helicase involved in RNA degradation. Has RNA-dependent ATPase activity and unwinds double-stranded RNA. This chain is ATP-dependent RNA helicase RhlB, found in Shewanella sediminis (strain HAW-EB3).